The chain runs to 283 residues: 4-diphosphocytidyl-2-C-methyl-D-erythritol kinase (283 aa).

Lys12 is a catalytic residue. Residue 99–109 (PLAAGIGGGSA) participates in ATP binding. Residue Asp141 is part of the active site.

Belongs to the GHMP kinase family. IspE subfamily.

The enzyme catalyses 4-CDP-2-C-methyl-D-erythritol + ATP = 4-CDP-2-C-methyl-D-erythritol 2-phosphate + ADP + H(+). Its pathway is isoprenoid biosynthesis; isopentenyl diphosphate biosynthesis via DXP pathway; isopentenyl diphosphate from 1-deoxy-D-xylulose 5-phosphate: step 3/6. Functionally, catalyzes the phosphorylation of the position 2 hydroxy group of 4-diphosphocytidyl-2C-methyl-D-erythritol. The sequence is that of 4-diphosphocytidyl-2-C-methyl-D-erythritol kinase from Sphingopyxis alaskensis (strain DSM 13593 / LMG 18877 / RB2256) (Sphingomonas alaskensis).